A 34-amino-acid chain; its full sequence is Photosystem II reaction center protein Psb30 (34 aa).

Residues 7-27 (VAQLLALFVIITSGPAIIILI) traverse the membrane as a helical segment.

The protein belongs to the Psb30/Ycf12 family. PSII is composed of 1 copy each of membrane proteins PsbA, PsbB, PsbC, PsbD, PsbE, PsbF, PsbH, PsbI, PsbJ, PsbK, PsbL, PsbM, PsbT, PsbX, PsbY, PsbZ, Psb30/Ycf12, peripheral proteins of the oxygen-evolving complex and a large number of cofactors. It forms dimeric complexes.

The protein resides in the plastid. Its subcellular location is the chloroplast thylakoid membrane. Its function is as follows. A core subunit of photosystem II (PSII), probably helps stabilize the reaction center. The chain is Photosystem II reaction center protein Psb30 from Guillardia theta (Cryptophyte).